The following is a 242-amino-acid chain: Octanoyltransferase (242 aa).

A BPL/LPL catalytic domain is found at 31–206 (SQTTDEIWFL…LFLKNFGYNQ (176 aa)). Residues 70 to 77 (RGGQVTYH), 137 to 139 (SIG), and 150 to 152 (GLA) contribute to the substrate site. Cysteine 168 functions as the Acyl-thioester intermediate in the catalytic mechanism.

Belongs to the LipB family.

It is found in the cytoplasm. It carries out the reaction octanoyl-[ACP] + L-lysyl-[protein] = N(6)-octanoyl-L-lysyl-[protein] + holo-[ACP] + H(+). Its pathway is protein modification; protein lipoylation via endogenous pathway; protein N(6)-(lipoyl)lysine from octanoyl-[acyl-carrier-protein]: step 1/2. Its function is as follows. Catalyzes the transfer of endogenously produced octanoic acid from octanoyl-acyl-carrier-protein onto the lipoyl domains of lipoate-dependent enzymes. Lipoyl-ACP can also act as a substrate although octanoyl-ACP is likely to be the physiological substrate. The protein is Octanoyltransferase of Coxiella burnetii (strain CbuK_Q154) (Coxiella burnetii (strain Q154)).